The primary structure comprises 599 residues: Spermatogenesis-associated protein 7 (599 aa).

A disordered region spans residues 163 to 205 (KSSKVITNGPEKNSSSSPSSVDYAASGPRKLSSGALYGRRPRS). Residues 166–175 (KVITNGPEKN) are compositionally biased toward polar residues.

Found in a complex with CFAP410, NEK1 and SPATA7. Interacts with NEK1. Interacts with RPGRIP1. Interacts with RPGR. Interacts with NPHP4. Interacts with NPHP1. Interacts with AHI1.

It is found in the cytoplasm. The protein localises to the cytoskeleton. It localises to the cilium axoneme. The protein resides in the cilium basal body. Its subcellular location is the cell projection. It is found in the cilium. The protein localises to the photoreceptor outer segment. Functionally, involved in the maintenance of both rod and cone photoreceptor cells. It is required for recruitment and proper localization of RPGRIP1 to the photoreceptor connecting cilium (CC), as well as photoreceptor-specific localization of proximal CC proteins at the distal CC. Maintenance of protein localization at the photoreceptor-specific distal CC is essential for normal microtubule stability and to prevent photoreceptor degeneration. In Homo sapiens (Human), this protein is Spermatogenesis-associated protein 7 (SPATA7).